The sequence spans 341 residues: Anthranilate phosphoribosyltransferase (341 aa).

5-phospho-alpha-D-ribose 1-diphosphate is bound by residues glycine 80, 83-84 (GD), threonine 88, 90-93 (NIST), 108-116 (KHGNRAVSS), and serine 120. An anthranilate-binding site is contributed by glycine 80. Mg(2+) is bound at residue serine 92. Asparagine 111 serves as a coordination point for anthranilate. Arginine 166 contacts anthranilate. Residues aspartate 225 and glutamate 226 each coordinate Mg(2+).

This sequence belongs to the anthranilate phosphoribosyltransferase family. As to quaternary structure, homodimer. The cofactor is Mg(2+).

The catalysed reaction is N-(5-phospho-beta-D-ribosyl)anthranilate + diphosphate = 5-phospho-alpha-D-ribose 1-diphosphate + anthranilate. The protein operates within amino-acid biosynthesis; L-tryptophan biosynthesis; L-tryptophan from chorismate: step 2/5. Its function is as follows. Catalyzes the transfer of the phosphoribosyl group of 5-phosphorylribose-1-pyrophosphate (PRPP) to anthranilate to yield N-(5'-phosphoribosyl)-anthranilate (PRA). The polypeptide is Anthranilate phosphoribosyltransferase (Priestia megaterium (strain ATCC 12872 / QMB1551) (Bacillus megaterium)).